The sequence spans 255 residues: Uridylate kinase (255 aa).

Position 22-25 (22-25 (KLSG)) interacts with ATP. An involved in allosteric activation by GTP region spans residues 30 to 35 (GNGGYG). UMP is bound at residue glycine 64. ATP is bound by residues glycine 65 and arginine 69. Residues aspartate 85 and 146–153 (TGNPFFTT) contribute to the UMP site. Asparagine 174, tyrosine 180, and aspartate 183 together coordinate ATP.

Belongs to the UMP kinase family. In terms of assembly, homohexamer.

The protein resides in the cytoplasm. The catalysed reaction is UMP + ATP = UDP + ADP. The protein operates within pyrimidine metabolism; CTP biosynthesis via de novo pathway; UDP from UMP (UMPK route): step 1/1. Allosterically activated by GTP. Inhibited by UTP. Functionally, catalyzes the reversible phosphorylation of UMP to UDP. This chain is Uridylate kinase, found in Rubrobacter xylanophilus (strain DSM 9941 / JCM 11954 / NBRC 16129 / PRD-1).